We begin with the raw amino-acid sequence, 253 residues long: Tetraspanin-3 (253 aa).

Over 1 to 11 (MGQCGITSSKT) the chain is Cytoplasmic. Residues 12–32 (VLVFLNLIFWGAAGILCYVGA) form a helical membrane-spanning segment. The Extracellular portion of the chain corresponds to 33–50 (YVFITYDDYDHFFEDVYT). The chain crosses the membrane as a helical span at residues 51-71 (LIPAVVIIAVGALLFIIGLIG). Residues 72-85 (CCATIRESRCGLAT) lie on the Cytoplasmic side of the membrane. The chain crosses the membrane as a helical span at residues 86–106 (FVIILLLVFVTEVVVVVLGYV). The Extracellular segment spans residues 107 to 212 (YRAKVENEVD…KKLQEIMMHV (106 aa)). Asn127, Asn152, Asn167, and Asn183 each carry an N-linked (GlcNAc...) asparagine glycan. A helical membrane pass occupies residues 213–233 (IWAALAFAAIQLLGMLCACIV). Residues 234-253 (LCRRSRDPAYELLITGGAYA) lie on the Cytoplasmic side of the membrane.

Belongs to the tetraspanin (TM4SF) family. Interacts with claudin-11/CLDN11 and integrins.

The protein resides in the membrane. Its function is as follows. Regulates the proliferation and migration of oligodendrocytes, a process essential for normal myelination and repair. The chain is Tetraspanin-3 (TSPAN3) from Bos taurus (Bovine).